The primary structure comprises 707 residues: MAAAVAAAGRLGWLFAALCLGNAAGEAAPGPRVLGFCLEEDGAAGAGWVRGGAARDTPDATFLLRLFGPGFANSSWSWVAPEGAGCREEAASPAGEWRALLRLRLRAEAVRPHSALLAVRVEPGGGAAEEAAPPWALGLGAAGLLALAALARGLQLSALALAPAEVQVLRESGSEAERAAARRLEPARRWAGCALGALLLLASLAQAALAVLLYRAAGQRAVPAVLGSAGLVFLVGEVVPAAVSGRWTLALAPRALGLSRLAVLLTLPVALPVGQLLELAARPGRLRERVLELARGGGDPYSDLSKGVLRCRTVEDVLTPLEDCFMLDASTVLDFGVLASIMQSGHTRIPVYEEERSNIVDMLYLKDLAFVDPEDCTPLSTITRFYNHPLHFVFNDTKLDAVLEEFKRGKSHLAIVQKVNNEGEGDPFYEVLGLVTLEDVIEEIIRSEILDESEDYRDTVVKRKPASLMAPLKRKEEFSLFKVSDDEYKVTISPQLLLATQRFLSREVDVFSPLRISEKVLLHLLKHPSVNQEVRFDESNRLATHHYLYQRSQPVDYFILILQGRVEVEIGKEGLKFENGAFTYYGVSALTVPSSVHQSPVSSLQPIRHDLQPDPGDGTHSSAYCPDYTVRALSDLQLIKVTRLQYLNALLATRAQNLPQSPENTDLQVIPGSQTRLLGEKTTTAAGSSHSRPGVPVEGSPGRNPGV.

Residues 11–27 (LGWLFAALCLGNAAGEA) traverse the membrane as a helical segment. The N-linked (GlcNAc...) asparagine glycan is linked to Asn-73. One can recognise a CNNM transmembrane domain in the interval 130-308 (EAAPPWALGL…DPYSDLSKGV (179 aa)). Transmembrane regions (helical) follow at residues 193–213 (CALGALLLLASLAQAALAVLL), 221–241 (AVPAVLGSAGLVFLVGEVVPA), and 261–281 (LAVLLTLPVALPVGQLLELAA). CBS domains are found at residues 318–379 (LTPL…CTPL) and 386–452 (YNHP…ILDE). Position 661 is a phosphoserine (Ser-661). The segment covering 678–691 (LGEKTTTAAGSSHS) has biased composition (polar residues). The interval 678 to 707 (LGEKTTTAAGSSHSRPGVPVEGSPGRNPGV) is disordered. Phosphoserine is present on Ser-700.

It belongs to the ACDP family. As to expression, widely expressed. Expressed at higher level in heart and spleen.

It is found in the cell membrane. Functionally, probable metal transporter. The protein is Metal transporter CNNM3 (CNNM3) of Homo sapiens (Human).